The sequence spans 113 residues: Large ribosomal subunit protein bL19 (113 aa).

It belongs to the bacterial ribosomal protein bL19 family.

In terms of biological role, this protein is located at the 30S-50S ribosomal subunit interface and may play a role in the structure and function of the aminoacyl-tRNA binding site. In Rhodococcus erythropolis (strain PR4 / NBRC 100887), this protein is Large ribosomal subunit protein bL19.